Here is a 177-residue protein sequence, read N- to C-terminus: Large ribosomal subunit protein uL6 (177 aa).

Belongs to the universal ribosomal protein uL6 family. In terms of assembly, part of the 50S ribosomal subunit.

Its function is as follows. This protein binds to the 23S rRNA, and is important in its secondary structure. It is located near the subunit interface in the base of the L7/L12 stalk, and near the tRNA binding site of the peptidyltransferase center. In Methylorubrum populi (strain ATCC BAA-705 / NCIMB 13946 / BJ001) (Methylobacterium populi), this protein is Large ribosomal subunit protein uL6.